The following is a 632-amino-acid chain: MPIVTLPDGSQKTFDSPITVMQLAESIGTGLAKACVAGKIDGVPVDTADVIEHDAEVSILTPRDQEGLEIIRHSCAHLVGHAVKQLYPDAKMAIGPVIDDGFYYDIDFGQSVSPEDLEAIEKRMKVLIDHEYEVIREYVTKEQALATFIDRDEPYKQEIVEGIADGETVRLYHHEEYIDMCRGPHVPNTRHLKAFKLTKLAGAYWRGDANKPMLTRIYGTAWADKKALKTYLKRLEEAEKRDHRKLARKLDFFHMQEEAPGMVFWHPRGWTLWQTVEQYMRGVYKDSGYQEIRCPQIMDVSLWQKSGHWDNYAENMFFTESEKREYALKPMNCPGHVQVFNSGLRSYRELPVRYGEFGGCHRNEPSGALHGIMRVRAFTQDDGHVFCTEEQIEPEVTAFHRQALAVYRDFGFDDIAVKIALRPEKRLGSDDNWDRAEEALRNALSRCDVEWEELPGEGAFYGPKIEYHMRDCLGREWQVGTMQVDFMMPTRLGAQYVAEDGSRQAPVMLHRAIVGSMERFIGILIEHYAGSMPLWLSPLQAVVLNITDAQREYAESVTQRLQKSGLRVKTDLRNEKIGFKIREHTLQKIPYLLVVGDKEVEAGAVAVRTRSGEDLGSLSVDALIARLQEEGV.

Positions 1-61 (MPIVTLPDGS…EHDAEVSILT (61 aa)) constitute a TGS domain. The segment at 242–533 (DHRKLARKLD…LIEHYAGSMP (292 aa)) is catalytic. Zn(2+) is bound by residues Cys333, His384, and His510.

Belongs to the class-II aminoacyl-tRNA synthetase family. Homodimer. Requires Zn(2+) as cofactor.

The protein localises to the cytoplasm. The enzyme catalyses tRNA(Thr) + L-threonine + ATP = L-threonyl-tRNA(Thr) + AMP + diphosphate + H(+). In terms of biological role, catalyzes the attachment of threonine to tRNA(Thr) in a two-step reaction: L-threonine is first activated by ATP to form Thr-AMP and then transferred to the acceptor end of tRNA(Thr). Also edits incorrectly charged L-seryl-tRNA(Thr). The polypeptide is Threonine--tRNA ligase (Chromohalobacter salexigens (strain ATCC BAA-138 / DSM 3043 / CIP 106854 / NCIMB 13768 / 1H11)).